A 105-amino-acid chain; its full sequence is ATP-dependent Clp protease adapter protein ClpS (105 aa).

This sequence belongs to the ClpS family. As to quaternary structure, binds to the N-terminal domain of the chaperone ClpA.

Its function is as follows. Involved in the modulation of the specificity of the ClpAP-mediated ATP-dependent protein degradation. This Prochlorococcus marinus (strain MIT 9515) protein is ATP-dependent Clp protease adapter protein ClpS.